A 260-amino-acid chain; its full sequence is 3-deoxy-manno-octulosonate cytidylyltransferase (260 aa).

The protein belongs to the KdsB family.

The protein localises to the cytoplasm. The enzyme catalyses 3-deoxy-alpha-D-manno-oct-2-ulosonate + CTP = CMP-3-deoxy-beta-D-manno-octulosonate + diphosphate. The protein operates within nucleotide-sugar biosynthesis; CMP-3-deoxy-D-manno-octulosonate biosynthesis; CMP-3-deoxy-D-manno-octulosonate from 3-deoxy-D-manno-octulosonate and CTP: step 1/1. It participates in bacterial outer membrane biogenesis; lipopolysaccharide biosynthesis. Activates KDO (a required 8-carbon sugar) for incorporation into bacterial lipopolysaccharide in Gram-negative bacteria. The polypeptide is 3-deoxy-manno-octulosonate cytidylyltransferase (Polaromonas naphthalenivorans (strain CJ2)).